The sequence spans 481 residues: MQWEVVIGLEIHTQLATQSKIFSGSATTFGSEPNTQASLVDLGMPGVLPVLNQEAVRMAVMFGLAIDAEIGQHNVFARKNYFYPDLPKGYQISQMELPIVGKGYLDIPLEDGTIKRVGVTRAHLEEDAGKSLHEEFNGATGIDLNRAGTPLLEIVSEPDMRSAKEAVAYVKTIHALVRYLGICDGNMAEGSLRCDCNVSVRPKGQAEYGTRCEIKNVNSFRFIEKAINTEVRRQIELIEDGGKVIQQTRLYDPNKDETRAMRSKEEANDYRYFPDPDLLPVVIEDSFLNDIRATLPELPPQKRERFQAQFGLSVYDASVLASSREQADYFEKVVSIAGDAKLAANWVMVELGSLLNKQGLEIDEAPVTAEQLGGMLLRIKDNTISGKIAKTVFEAMASGEGSADEIIEKRGLKQVTDSGAISAVLDEMLAANAEQVKQYRAADEAKRGKMFGFFVGQAMKASKGKANPQQVNELLKSKLEG.

This sequence belongs to the GatB/GatE family. GatB subfamily. As to quaternary structure, heterotrimer of A, B and C subunits.

It catalyses the reaction L-glutamyl-tRNA(Gln) + L-glutamine + ATP + H2O = L-glutaminyl-tRNA(Gln) + L-glutamate + ADP + phosphate + H(+). It carries out the reaction L-aspartyl-tRNA(Asn) + L-glutamine + ATP + H2O = L-asparaginyl-tRNA(Asn) + L-glutamate + ADP + phosphate + 2 H(+). Functionally, allows the formation of correctly charged Asn-tRNA(Asn) or Gln-tRNA(Gln) through the transamidation of misacylated Asp-tRNA(Asn) or Glu-tRNA(Gln) in organisms which lack either or both of asparaginyl-tRNA or glutaminyl-tRNA synthetases. The reaction takes place in the presence of glutamine and ATP through an activated phospho-Asp-tRNA(Asn) or phospho-Glu-tRNA(Gln). This chain is Aspartyl/glutamyl-tRNA(Asn/Gln) amidotransferase subunit B, found in Pseudomonas fluorescens (strain SBW25).